Reading from the N-terminus, the 281-residue chain is 3-mercaptopyruvate sulfurtransferase (281 aa).

Rhodanese domains lie at 17–135 and 165–278; these read DDPE…LLEE and HENT…LPVE. Arginine 179 lines the substrate pocket. Cysteine 238 functions as the Cysteine persulfide intermediate in the catalytic mechanism. Positions 238–244 are substrate specificity; sequence CGSGVTA.

In terms of assembly, monomer.

It is found in the cytoplasm. The catalysed reaction is 2-oxo-3-sulfanylpropanoate + [thioredoxin]-dithiol = [thioredoxin]-disulfide + hydrogen sulfide + pyruvate + H(+). Its function is as follows. Catalyzes the transfer of sulfur from 3-mercaptopyruvate to a thiol-containing acceptor to form an intramolecular disulfide releasing hydrogen sulfide and pyruvate. May be involved in the enhancement of bacterial growth inhibition by serine. The polypeptide is 3-mercaptopyruvate sulfurtransferase (sseA) (Escherichia coli (strain K12)).